The sequence spans 91 residues: Small ribosomal subunit protein bS6 (91 aa).

This sequence belongs to the bacterial ribosomal protein bS6 family.

Its function is as follows. Binds together with bS18 to 16S ribosomal RNA. This is Small ribosomal subunit protein bS6 from Leptospira interrogans serogroup Icterohaemorrhagiae serovar copenhageni (strain Fiocruz L1-130).